Consider the following 353-residue polypeptide: Histidinol-phosphate aminotransferase (353 aa).

Residue K211 is modified to N6-(pyridoxal phosphate)lysine.

The protein belongs to the class-II pyridoxal-phosphate-dependent aminotransferase family. Histidinol-phosphate aminotransferase subfamily. Homodimer. It depends on pyridoxal 5'-phosphate as a cofactor.

It carries out the reaction L-histidinol phosphate + 2-oxoglutarate = 3-(imidazol-4-yl)-2-oxopropyl phosphate + L-glutamate. Its pathway is amino-acid biosynthesis; L-histidine biosynthesis; L-histidine from 5-phospho-alpha-D-ribose 1-diphosphate: step 7/9. The protein is Histidinol-phosphate aminotransferase of Klebsiella pneumoniae (strain 342).